Reading from the N-terminus, the 159-residue chain is UPF0756 membrane protein PTH_1668 (159 aa).

Helical transmembrane passes span 15 to 37 (ILITLLFLGLFGRSNLVVSSSCI), 61 to 81 (LGLVLLMLHILSPVATEKLTI), 117 to 137 (PEIIFGLTVGTVLGILFLRGT), and 138 to 158 (PCGPVMAAAVTAVFLQIASLF).

This sequence belongs to the UPF0756 family.

The protein localises to the cell membrane. The polypeptide is UPF0756 membrane protein PTH_1668 (Pelotomaculum thermopropionicum (strain DSM 13744 / JCM 10971 / SI)).